Consider the following 1007-residue polypeptide: Beta-galactosidase A (1007 aa).

An N-terminal signal peptide occupies residues 1-18 (MKLSSACAIALLAAQAAG). Substrate-binding positions include Tyr-96 and 140–142 (NAE). N-linked (GlcNAc...) asparagine glycosylation is present at Asn-156. Asn-199 contacts substrate. Glu-200 functions as the Proton donor in the catalytic mechanism. Intrachain disulfides connect Cys-205-Cys-206 and Cys-266-Cys-315. The Nucleophile role is filled by Glu-298. Tyr-364 provides a ligand contact to substrate. 10 N-linked (GlcNAc...) asparagine glycosylation sites follow: Asn-402, Asn-422, Asn-478, Asn-522, Asn-622, Asn-739, Asn-760, Asn-777, Asn-805, and Asn-914.

Belongs to the glycosyl hydrolase 35 family.

Its subcellular location is the secreted. The enzyme catalyses Hydrolysis of terminal non-reducing beta-D-galactose residues in beta-D-galactosides.. Functionally, cleaves beta-linked terminal galactosyl residues from gangliosides, glycoproteins, and glycosaminoglycans. The sequence is that of Beta-galactosidase A (lacA) from Aspergillus niger (strain ATCC MYA-4892 / CBS 513.88 / FGSC A1513).